Reading from the N-terminus, the 51-residue chain is Large ribosomal subunit protein bL32c (51 aa).

This sequence belongs to the bacterial ribosomal protein bL32 family.

It is found in the plastid. Its subcellular location is the chloroplast. In Oenothera elata subsp. hookeri (Hooker's evening primrose), this protein is Large ribosomal subunit protein bL32c.